The sequence spans 296 residues: Phosphatidylserine decarboxylase proenzyme (296 aa).

Active-site charge relay system; for autoendoproteolytic cleavage activity residues include Asp-113, His-169, and Ser-256. The active-site Schiff-base intermediate with substrate; via pyruvic acid; for decarboxylase activity is Ser-256. The residue at position 256 (Ser-256) is a Pyruvic acid (Ser); by autocatalysis.

This sequence belongs to the phosphatidylserine decarboxylase family. PSD-B subfamily. Prokaryotic type II sub-subfamily. As to quaternary structure, heterodimer of a large membrane-associated beta subunit and a small pyruvoyl-containing alpha subunit. Requires pyruvate as cofactor. In terms of processing, is synthesized initially as an inactive proenzyme. Formation of the active enzyme involves a self-maturation process in which the active site pyruvoyl group is generated from an internal serine residue via an autocatalytic post-translational modification. Two non-identical subunits are generated from the proenzyme in this reaction, and the pyruvate is formed at the N-terminus of the alpha chain, which is derived from the carboxyl end of the proenzyme. The autoendoproteolytic cleavage occurs by a canonical serine protease mechanism, in which the side chain hydroxyl group of the serine supplies its oxygen atom to form the C-terminus of the beta chain, while the remainder of the serine residue undergoes an oxidative deamination to produce ammonia and the pyruvoyl prosthetic group on the alpha chain. During this reaction, the Ser that is part of the protease active site of the proenzyme becomes the pyruvoyl prosthetic group, which constitutes an essential element of the active site of the mature decarboxylase.

The protein resides in the cell membrane. The enzyme catalyses a 1,2-diacyl-sn-glycero-3-phospho-L-serine + H(+) = a 1,2-diacyl-sn-glycero-3-phosphoethanolamine + CO2. The protein operates within phospholipid metabolism; phosphatidylethanolamine biosynthesis; phosphatidylethanolamine from CDP-diacylglycerol: step 2/2. In terms of biological role, catalyzes the formation of phosphatidylethanolamine (PtdEtn) from phosphatidylserine (PtdSer). The chain is Phosphatidylserine decarboxylase proenzyme from Clostridium botulinum (strain Alaska E43 / Type E3).